Reading from the N-terminus, the 1102-residue chain is Voltage-gated delayed rectifier potassium channel KCNH8 (1102 aa).

The Cytoplasmic portion of the chain corresponds to 1–225 (MPVMKGLLAP…HFSTFKAGWD (225 aa)). In terms of domain architecture, PAS spans 18–90 (IATRFDGTHS…LQIEKSLEEK (73 aa)). The region spanning 93-145 (FKGEIMFYKKNGAPFWCLLDIVPIKNEKGDVVLFLASFKDITDTKVKITSEDK) is the PAC domain. The helical transmembrane segment at 226–246 (WLILLATFYVAVTVPYNVCFI) threads the bilayer. Over 247–255 (GNEDLSTTR) the chain is Extracellular. Residues 256–276 (STTVSDIAVEILFIIDIILNF) traverse the membrane as a helical segment. Over 277-298 (RTTYVSKSGQVIFEARSICIHY) the chain is Cytoplasmic. Residues 299 to 319 (VTTWFIIDLIAALPFDLLYAF) form a helical membrane-spanning segment. A glycan (N-linked (GlcNAc...) asparagine) is linked at asparagine 320. Topologically, residues 320-327 (NVTVVSLV) are extracellular. A helical; Voltage-sensor transmembrane segment spans residues 328–348 (HLLKTVRLLRLLRLLQKLDRY). Over 349–353 (SQHST) the chain is Cytoplasmic. A helical membrane pass occupies residues 354 to 374 (IVLTLLMSMFALLAHWMACIW). Residues 375 to 419 (YVIGKMEREDNSLLKWEVGWLHELGKRLESPYYGNNTLGGPSIRS) lie on the Extracellular side of the membrane. N-linked (GlcNAc...) asparagine glycosylation occurs at asparagine 409. The segment at residues 420-440 (AYIAALYFTLSSLTSVGFGNV) is an intramembrane region (pore-forming). Positions 434–439 (SVGFGN) match the Selectivity filter motif. Over 441–448 (SANTDAEK) the chain is Extracellular. A helical membrane pass occupies residues 449-469 (IFSICTMLIGALMHALVFGNV). The Cytoplasmic segment spans residues 470-1102 (TAIIQRMYSR…DVKDSKAINV (633 aa)). Residues 551–668 (LFECASRGCL…HKFVEDIQHD (118 aa)) are cNMP-binding domain. Disordered stretches follow at residues 683–744 (SRLS…KTGS), 762–793 (PFHS…KEKN), 818–845 (EDGN…ISPS), and 960–983 (LVGS…LHHS). Residues 710-723 (VEDEEEEEVEEEET) are compositionally biased toward acidic residues. The segment covering 777–793 (TKQEADPPNHGTRKEKN) has biased composition (basic and acidic residues). Residues 968 to 982 (TEAHEQSPVDSELHH) show a composition bias toward basic and acidic residues.

This sequence belongs to the potassium channel family. H (Eag) (TC 1.A.1.20) subfamily. Kv12.1/KCNH8 sub-subfamily. The potassium channel is probably composed of a homo- or heterotetrameric complex of pore-forming alpha subunits that can associate with modulating beta subunits. As to expression, detected in superior cervical, mesenteric and coeliac ganglia. Expressed in brain (piriform cortex, olfactory tubercle, cerebral cortex, hippocampus pyramidial cells and dentate gyrus and basal ganglia of caudate/putamen and accumbens nucleus). Expressed in pituitary.

It localises to the membrane. It catalyses the reaction K(+)(in) = K(+)(out). In terms of biological role, pore-forming (alpha) subunit of a voltage-gated delayed rectifier potassium channel that mediates outward-rectifying potassium currents. Elicits a slowly activating, non-inactivating and slowly deactivation outwards potassium current at depolarizating voltages from -30 mV to +50mV. Shows no obvious change in the activation rate from different holding potentials. Activation is strongly dependent on the pH of the external solution. This Rattus norvegicus (Rat) protein is Voltage-gated delayed rectifier potassium channel KCNH8.